The chain runs to 382 residues: Opsin-VA (382 aa).

Residues M1 to T35 are Extracellular-facing. A helical transmembrane segment spans residues L36–F56. Topologically, residues R57–Y67 are cytoplasmic. A helical transmembrane segment spans residues I68–F88. The Extracellular segment spans residues L89–C103. A disulfide bridge connects residues C103 and C180. Residues V104 to L124 form a helical membrane-spanning segment. Residues A125 to A147 are Cytoplasmic-facing. The chain crosses the membrane as a helical span at residues L148–W168. Topologically, residues S169–T193 are extracellular. Residues F194–Y214 traverse the membrane as a helical segment. Residues C215–M244 are Cytoplasmic-facing. The chain crosses the membrane as a helical span at residues V245–V265. Topologically, residues V266–A279 are extracellular. A helical membrane pass occupies residues A280–M300. Residue K287 is modified to N6-(retinylidene)lysine. At N301–M382 the chain is on the cytoplasmic side. Polar residues predominate over residues R330 to A346. The segment at R330–H371 is disordered. A compositionally biased stretch (basic and acidic residues) spans I349–S368.

Belongs to the G-protein coupled receptor 1 family. Opsin subfamily. In terms of tissue distribution, expressed in a subset of retinal horizontal cells as well as in retinal ganglion cells.

It localises to the membrane. The chain is Opsin-VA from Rutilus rutilus (Roach).